Reading from the N-terminus, the 1222-residue chain is Alpha-mannosidase D (1222 aa).

The signal sequence occupies residues 1-21 (MESSKFVKIIWVFGIWILVFT). The Extracellular portion of the chain corresponds to 22–1170 (FLIIYNNYDY…KYNRPNHLAL (1149 aa)). Zn(2+)-binding residues include His71 and Asp73. An N-linked (GlcNAc...) asparagine glycan is attached at Asn175. Residues Asp185 and His453 each contribute to the Zn(2+) site. Asp185 (nucleophile) is an active-site residue. 13 N-linked (GlcNAc...) asparagine glycosylation sites follow: Asn492, Asn496, Asn547, Asn551, Asn566, Asn613, Asn665, Asn768, Asn785, Asn952, Asn981, Asn1069, and Asn1084. Low complexity predominate over residues 493-549 (KSNNKTNNNNNNNNKNNNNNNNNNNNNNNNLKNTNSISTTGSSSSSGSGSSNNNNNT). The tract at residues 493–554 (KSNNKTNNNN…NNNNTVNKSE (62 aa)) is disordered. Residues 1171-1191 (ILSLSIGIPAGILIIVIALVV) traverse the membrane as a helical segment. Topologically, residues 1192–1222 (TYKKRKNRKTLTSSNSSSNLIQQEDQTDYSP) are cytoplasmic. The segment covering 1202–1211 (LTSSNSSSNL) has biased composition (low complexity). The tract at residues 1202-1222 (LTSSNSSSNLIQQEDQTDYSP) is disordered. Polar residues predominate over residues 1212-1222 (IQQEDQTDYSP).

It belongs to the glycosyl hydrolase 38 family. Zn(2+) is required as a cofactor.

It localises to the membrane. It catalyses the reaction Hydrolysis of terminal, non-reducing alpha-D-mannose residues in alpha-D-mannosides.. The sequence is that of Alpha-mannosidase D (manD) from Dictyostelium discoideum (Social amoeba).